Here is a 532-residue protein sequence, read N- to C-terminus: 5-methylcytosine-modifying enzyme 1 (532 aa).

335 to 337 (SLT) serves as a coordination point for L-ascorbate. 3 residues coordinate Fe cation: H345, D347, and H397. 397 to 399 (HGT) is a binding site for L-ascorbate.

Belongs to the TET family. It depends on Fe(2+) as a cofactor.

It localises to the nucleus. The catalysed reaction is a 5-methyl-2'-deoxycytidine in DNA + L-ascorbate + O2 = a (8S,9S)-5-glyceryl-2'-deoxycytidine in DNA + glyoxylate + CO2. The enzyme catalyses a 5-methyl-2'-deoxycytidine in DNA + L-ascorbate + O2 = a (8S,9R)-5-glyceryl-2'-deoxycytidine in DNA + glyoxylate + CO2. Dioxygenase that catalyzes DNA modification by mediating the conversion of the modified genomic base 5-methylcytosine (5mC) into 5-glyceryl-methylcytosine (5gmC). Catalyzes the conjugation of a glyceryl moiety from L-ascorbate (vitamin C) to the methyl group of 5mC through a carbon-carbon bond. 5gmC DNA modification may be required during photosynthesis as an epigenetic mark that couteracts DNA methylation. In Chlamydomonas reinhardtii (Chlamydomonas smithii), this protein is 5-methylcytosine-modifying enzyme 1.